A 744-amino-acid polypeptide reads, in one-letter code: Tripartite motif-containing protein 3 (744 aa).

At Ala2 the chain carries N-acetylalanine. The interval 2-290 (AKREDSPGPE…LAAQAFPERP (289 aa)) is interaction with KIF21B. Residue Ser7 is modified to Phosphoserine. The RING-type zinc-finger motif lies at 22-63 (CSICLDRYRCPKVLPCLHTFCERCLQNYIPPQSLTLSCPVCR). The B box-type zinc-finger motif lies at 110–151 (GRPLSCPNHEGKTMEFYCEACETAMCGECRAGEHREHGTVLL). Positions 115, 118, 138, and 143 each coordinate Zn(2+). A coiled-coil region spans residues 153-224 (DVVEQHKAAL…RKQALVSDLE (72 aa)). A Filamin repeat occupies 317-418 (TTSAAAHETV…VRGSPFRVRA (102 aa)). The interval 420–462 (RPGDLPPSPDDVKRRVKSPGGPGSHVRQKAVRRPSSMYSTGGK) is disordered. Ser427 carries the phosphoserine modification. NHL repeat units lie at residues 473–516 (VFRV…FSNE), 520–563 (KFRF…FSPE), 564–605 (GKFK…FQPN), 609–652 (VGRF…YSAD), 656–699 (LFKF…FDSS), and 700–743 (GSFL…YRYL).

Belongs to the TRIM/RBCC family. As to quaternary structure, forms homooligomers. Interacts with TRIM2; this interaction reduces TRIM2 activity. Associates with myosin-Vb (MYO5B) and alpha-actinin-4 (ACTN4). Component of the CART complex, at least composed of ACTN4, HGS/HRS, MYO5B and TRIM3. Interacts with ZFYVE28/LST2. Interacts with KIF21B. As to expression, highly expressed in the brain, moderate levels in the lung, very low levels in the liver, kidney and heart. In the brain, expression was highest in the cerebellum. Expression in the brain is found at low levels at embryonic day 15 and then increases during the first two postnatal weeks before decreasing through adulthood.

The protein localises to the cytoplasm. It localises to the early endosome. It is found in the golgi apparatus. The protein resides in the trans-Golgi network. Its subcellular location is the cell projection. The protein localises to the dendrite. The catalysed reaction is S-ubiquitinyl-[E2 ubiquitin-conjugating enzyme]-L-cysteine + [acceptor protein]-L-lysine = [E2 ubiquitin-conjugating enzyme]-L-cysteine + N(6)-ubiquitinyl-[acceptor protein]-L-lysine.. E3 ubiquitin ligase that plays essential roles in neuronal functions such as regulation of neuronal plasticity, learning, and memory. In addition to its neuronal functions, participates in other biological processes such as innate immunity or cell cycle regulation. Component of the cytoskeleton-associated recycling or transport complex in neurons, polyubiquitinates gamma-actin, thus regulating neuronal plasticity, learning, and memory. Ubiquitinates postsynaptic scaffold GKAP, a neuronal substrate involved in synaptic remodeling and thereby modulates dendritic spine morphology. Positively regulates motility of microtubule-dependent motor protein KIF21B. Induces growth arrest via its RING-dependent E3 ligase activity and ubiquinates CDKN1A. Positively regulates TLR3-mediated signaling by mediating 'Lys-63'-linked polyubiquitination of TLR3. In turn, promotes the recognition and sorting of polyubiquitinated TLR3 by the ESCRT complexes. This is Tripartite motif-containing protein 3 (Trim3) from Rattus norvegicus (Rat).